The sequence spans 473 residues: DNA-binding protein (473 aa).

Disordered stretches follow at residues 1-69 (MAGR…GFSH) and 85-111 (RRLE…SKAV). Residues 7 to 18 (ELPTITPYLQET) show a composition bias toward polar residues. Over residues 53 to 62 (PDSEEEEEEV) the composition is skewed to acidic residues. Tyr141 carries the post-translational modification Phosphotyrosine; by host. Zn(2+)-binding residues include Cys230 and His232. The interval 243-277 (VEMDVASENAQRALKEHPSRAKVVQNRWGRSVVQL) is flexible loop. Zn(2+)-binding residues include Cys285, Cys301, Cys342, Cys344, Cys396, and Cys412. A C-terminal arm, DBP binding region spans residues 459–473 (VALPASHGDGEKEPF).

The protein belongs to the adenoviridae E2A DNA-binding protein family. Homomultimerizes on viral ssDNA bound to pTP. Forms a initiation complex with viral polymerase, pTP and hosts NFIA and POU2F1/OCT1. Interacts with host SRCAP.

Its subcellular location is the host nucleus. Functionally, plays a role in the elongation phase of viral strand displacement replication by unwinding the template in an ATP-independent fashion, employing its capacity to form multimers. Also enhances the rate of initiation. Released from template upon second strand synthesis. Assembles in complex with viral pTP, viral pol, host NFIA and host POU2F1/OCT1 on viral origin of replication. Covers the whole ssDNA genome during synthesis. The complementary strand synthesis induces its relese from DNA template. May inhibit cellular transcription mediated by the interaction between host SRCAP and CBP. This is DNA-binding protein from Homo sapiens (Human).